Here is a 169-residue protein sequence, read N- to C-terminus: Group 2 truncated hemoglobin 3-2 (169 aa).

Heme b is bound at residue His99.

It belongs to the truncated hemoglobin family. Group II subfamily. In terms of assembly, homodimer when ferric.

Its function is as follows. Hemoglobin-like protein that exhibits an unusual concentration-independent binding of O(2) and CO. Required for general plant development and during nodulation. May promote shoot organogenesis from root explants. This Medicago truncatula (Barrel medic) protein is Group 2 truncated hemoglobin 3-2.